The following is a 429-amino-acid chain: Enolase (429 aa).

A (2R)-2-phosphoglycerate-binding site is contributed by Gln162. Glu204 serves as the catalytic Proton donor. Mg(2+) is bound by residues Asp241, Glu283, and Asp310. Positions 335, 364, 365, and 386 each coordinate (2R)-2-phosphoglycerate. Residue Lys335 is the Proton acceptor of the active site.

This sequence belongs to the enolase family. The cofactor is Mg(2+).

Its subcellular location is the cytoplasm. The protein localises to the secreted. It localises to the cell surface. The catalysed reaction is (2R)-2-phosphoglycerate = phosphoenolpyruvate + H2O. Its pathway is carbohydrate degradation; glycolysis; pyruvate from D-glyceraldehyde 3-phosphate: step 4/5. Its function is as follows. Catalyzes the reversible conversion of 2-phosphoglycerate (2-PG) into phosphoenolpyruvate (PEP). It is essential for the degradation of carbohydrates via glycolysis. This is Enolase from Mycolicibacterium vanbaalenii (strain DSM 7251 / JCM 13017 / BCRC 16820 / KCTC 9966 / NRRL B-24157 / PYR-1) (Mycobacterium vanbaalenii).